Consider the following 166-residue polypeptide: Ribosome maturation factor RimM (166 aa).

Positions 92-164 constitute a PRC barrel domain; sequence EGVYYDFQLI…KIIIDPIPGL (73 aa).

Belongs to the RimM family. In terms of assembly, binds ribosomal protein uS19.

Its subcellular location is the cytoplasm. Its function is as follows. An accessory protein needed during the final step in the assembly of 30S ribosomal subunit, possibly for assembly of the head region. Essential for efficient processing of 16S rRNA. May be needed both before and after RbfA during the maturation of 16S rRNA. It has affinity for free ribosomal 30S subunits but not for 70S ribosomes. This Dehalococcoides mccartyi (strain CBDB1) protein is Ribosome maturation factor RimM.